Consider the following 270-residue polypeptide: MIOREX complex component 3 (270 aa).

The N-terminal 12 residues, Met1–Val12, are a transit peptide targeting the mitochondrion.

As to quaternary structure, associates with the mitochondrial ribosome.

The protein localises to the mitochondrion. Its function is as follows. Component of MIOREX complexes, large expressome-like assemblies of ribosomes with factors involved in all the steps of post-transcriptional gene expression. The chain is MIOREX complex component 3 from Saccharomyces cerevisiae (strain ATCC 204508 / S288c) (Baker's yeast).